The primary structure comprises 620 residues: DNA primase (620 aa).

The CHC2-type zinc finger occupies 38–62; that stretch reads CPFHADQNPSMTVSVAKNIFKCFSC. A Toprim domain is found at 266–350; that stretch reads LKLYLVEGYF…IVEVVDWNQA (85 aa). Mg(2+) is bound by residues E272, D319, and D321.

This sequence belongs to the DnaG primase family. Monomer. Interacts with DnaB. It depends on Zn(2+) as a cofactor. Mg(2+) serves as cofactor.

The enzyme catalyses ssDNA + n NTP = ssDNA/pppN(pN)n-1 hybrid + (n-1) diphosphate.. Functionally, RNA polymerase that catalyzes the synthesis of short RNA molecules used as primers for DNA polymerase during DNA replication. The chain is DNA primase from Mycoplasma pneumoniae (strain ATCC 29342 / M129 / Subtype 1) (Mycoplasmoides pneumoniae).